The following is a 117-amino-acid chain: Immunoglobulin lambda variable 1-44 (117 aa).

Positions 1–19 (MASFPLLLTLLTHCAGSWA) are cleaved as a signal peptide. Residue glutamine 20 is modified to Pyrrolidone carboxylic acid. Residues 20-44 (QSVLTQPPSASGTPGQRVTISCSGS) form a framework-1 region. In terms of domain architecture, Ig-like spans 20–117 (QSVLTQPPSA…CAAWDDSLNG (98 aa)). The span at 24–35 (TQPPSASGTPGQ) shows a compositional bias: polar residues. A disordered region spans residues 24 to 45 (TQPPSASGTPGQRVTISCSGSS). Cysteine 41 and cysteine 108 are joined by a disulfide. The segment at 45-52 (SSNIGSNT) is complementarity-determining-1. The interval 53–69 (VNWYQQLPGTAPKLLIY) is framework-2. Residues 70–72 (SNN) form a complementarity-determining-2 region. A framework-3 region spans residues 73–108 (QRPSGVPDRFSGSKSGTSASLAISGLQSEDEADYYC). Residues 109-117 (AAWDDSLNG) are complementarity-determining-3.

As to quaternary structure, immunoglobulins are composed of two identical heavy chains and two identical light chains; disulfide-linked.

Its subcellular location is the secreted. The protein localises to the cell membrane. In terms of biological role, v region of the variable domain of immunoglobulin light chains that participates in the antigen recognition. Immunoglobulins, also known as antibodies, are membrane-bound or secreted glycoproteins produced by B lymphocytes. In the recognition phase of humoral immunity, the membrane-bound immunoglobulins serve as receptors which, upon binding of a specific antigen, trigger the clonal expansion and differentiation of B lymphocytes into immunoglobulins-secreting plasma cells. Secreted immunoglobulins mediate the effector phase of humoral immunity, which results in the elimination of bound antigens. The antigen binding site is formed by the variable domain of one heavy chain, together with that of its associated light chain. Thus, each immunoglobulin has two antigen binding sites with remarkable affinity for a particular antigen. The variable domains are assembled by a process called V-(D)-J rearrangement and can then be subjected to somatic hypermutations which, after exposure to antigen and selection, allow affinity maturation for a particular antigen. The chain is Immunoglobulin lambda variable 1-44 from Homo sapiens (Human).